The primary structure comprises 70 residues: Disintegrin triflavin (70 aa).

The 70-residue stretch at 1–70 (GEECDCGSPS…SADCPRWNGL (70 aa)) folds into the Disintegrin domain. Cystine bridges form between Cys4–Cys19, Cys6–Cys14, Cys13–Cys36, Cys27–Cys33, Cys32–Cys57, and Cys45–Cys64. Residues 49-51 (RGD) carry the Cell attachment site motif.

It belongs to the venom metalloproteinase (M12B) family. P-II subfamily. P-IIa sub-subfamily. In terms of assembly, monomer. As to expression, expressed by the venom gland.

Its subcellular location is the secreted. Inhibits fibrinogen interaction with platelets. Acts by binding to alpha-IIb/beta-3 (ITGA2B/ITGB3) on the platelet surface and inhibits aggregation induced by ADP, thrombin, platelet-activating factor and collagen. In Protobothrops flavoviridis (Habu), this protein is Disintegrin triflavin.